The primary structure comprises 126 residues: Protein ApaG (126 aa).

One can recognise an ApaG domain in the interval 2–126 (NQRLSPIKVE…FSLAVPGLLH (125 aa)).

The sequence is that of Protein ApaG from Shewanella piezotolerans (strain WP3 / JCM 13877).